The primary structure comprises 255 residues: Pyridoxine 5'-phosphate synthase (255 aa).

Residues N8 and R19 each coordinate 3-amino-2-oxopropyl phosphate. H44 acts as the Proton acceptor in catalysis. R46 and H51 together coordinate 1-deoxy-D-xylulose 5-phosphate. Catalysis depends on E74, which acts as the Proton acceptor. 1-deoxy-D-xylulose 5-phosphate is bound at residue T111. H202 acts as the Proton donor in catalysis. Residues D203 and 225–226 (GH) contribute to the 3-amino-2-oxopropyl phosphate site.

It belongs to the PNP synthase family. As to quaternary structure, homooctamer; tetramer of dimers.

It localises to the cytoplasm. The catalysed reaction is 3-amino-2-oxopropyl phosphate + 1-deoxy-D-xylulose 5-phosphate = pyridoxine 5'-phosphate + phosphate + 2 H2O + H(+). It participates in cofactor biosynthesis; pyridoxine 5'-phosphate biosynthesis; pyridoxine 5'-phosphate from D-erythrose 4-phosphate: step 5/5. In terms of biological role, catalyzes the complicated ring closure reaction between the two acyclic compounds 1-deoxy-D-xylulose-5-phosphate (DXP) and 3-amino-2-oxopropyl phosphate (1-amino-acetone-3-phosphate or AAP) to form pyridoxine 5'-phosphate (PNP) and inorganic phosphate. This is Pyridoxine 5'-phosphate synthase from Xanthomonas axonopodis pv. citri (strain 306).